The chain runs to 561 residues: MAPQEQAVSQVMEKQSNNNNSDVIFRSKLPDIYIPNHLSLHDYIFQNISEFATKPCLINGPTGHVYTYSDVHVISRQIAANFHKLGVNQNDVVMLLLPNCPEFVLSFLAASFRGATATAANPFFTPAEIAKQAKASNTKLIITEARYVDKIKPLQNDDGVVIVCIDDNESVPIPEGCLRFTELTQSTTEASEVIDSVEISPDDVVALPYSSGTTGLPKGVMLTHKGLVTSVAQQVDGENPNLYFHSDDVILCVLPMFHIYALNSIMLCGLRVGAAILIMPKFEINLLLELIQRCKVTVAPMVPPIVLAIAKSSETEKYDLSSIRVVKSGAAPLGKELEDAVNAKFPNAKLGQGYGMTEAGPVLAMSLGFAKEPFPVKSGACGTVVRNAEMKIVDPDTGDSLSRNQPGEICIRGHQIMKGYLNNPAATAETIDKDGWLHTGDIGLIDDDDELFIVDRLKELIKYKGFQVAPAELEALLIGHPDITDVAVVAMKEEAAGEVPVAFVVKSKDSELSEDDVKQFVSKQVVFYKRINKVFFTESIPKAPSGKILRKDLRAKLANGL.

The ATP site is built by Ser-210, Ser-211, Gly-212, Thr-213, Thr-214, and Lys-218. 2 residues coordinate (E)-4-coumaroyl-AMP: Tyr-260 and Ser-264. Residue Lys-281 participates in CoA binding. The interval 283–352 is SBD1; the sequence is EINLLLELIQ…AKFPNAKLGQ (70 aa). (E)-4-coumaroyl-AMP-binding residues include Ala-330, Gln-352, Gly-353, Thr-357, and Met-365. Gln-352, Gly-353, and Thr-357 together coordinate ATP. Positions 353–420 are SBD2; that stretch reads GYGMTEAGPV…IRGHQIMKGY (68 aa). Residues Asp-441 and Arg-456 each coordinate ATP. (E)-4-coumaroyl-AMP contacts are provided by Lys-458 and Lys-462. Lys-464 and Gly-465 together coordinate CoA. Residue Lys-547 coordinates ATP.

It belongs to the ATP-dependent AMP-binding enzyme family. Mg(2+) is required as a cofactor. In terms of tissue distribution, preferentially expressed in roots, bolting stems and siliques. Also detected in leaves.

The enzyme catalyses (E)-4-coumarate + ATP + CoA = (E)-4-coumaroyl-CoA + AMP + diphosphate. It carries out the reaction (E)-caffeate + ATP + CoA = (E)-caffeoyl-CoA + AMP + diphosphate. It catalyses the reaction (E)-ferulate + ATP + CoA = (E)-feruloyl-CoA + AMP + diphosphate. The catalysed reaction is (E)-4-coumarate + ATP + H(+) = (E)-4-coumaroyl-AMP + diphosphate. The enzyme catalyses (E)-4-coumaroyl-AMP + CoA = (E)-4-coumaroyl-CoA + AMP + H(+). It carries out the reaction (E)-caffeate + ATP + H(+) = (E)-caffeoyl-AMP + diphosphate. It catalyses the reaction (E)-caffeoyl-AMP + CoA = (E)-caffeoyl-CoA + AMP + H(+). The catalysed reaction is (E)-ferulate + ATP + H(+) = (E)-feruloyl-AMP + diphosphate. The enzyme catalyses (E)-feruloyl-AMP + CoA = (E)-feruloyl-CoA + AMP + H(+). It participates in phytoalexin biosynthesis; 3,4',5-trihydroxystilbene biosynthesis; 3,4',5-trihydroxystilbene from trans-4-coumarate: step 1/2. Functionally, produces CoA thioesters of a variety of hydroxy- and methoxy-substituted cinnamic acids, which are used to synthesize several phenylpropanoid-derived compounds, including anthocyanins, flavonoids, isoflavonoids, coumarins, lignin, suberin and wall-bound phenolics. Follows a two-step reaction mechanism, wherein the carboxylate substrate first undergoes adenylation by ATP, followed by a thioesterification in the presence of CoA to yield the final CoA thioesters. The sequence is that of 4-coumarate--CoA ligase 1 from Arabidopsis thaliana (Mouse-ear cress).